A 114-amino-acid chain; its full sequence is Large ribosomal subunit protein uL24 (114 aa).

Belongs to the universal ribosomal protein uL24 family. As to quaternary structure, part of the 50S ribosomal subunit.

One of two assembly initiator proteins, it binds directly to the 5'-end of the 23S rRNA, where it nucleates assembly of the 50S subunit. Its function is as follows. One of the proteins that surrounds the polypeptide exit tunnel on the outside of the subunit. The sequence is that of Large ribosomal subunit protein uL24 from Acidothermus cellulolyticus (strain ATCC 43068 / DSM 8971 / 11B).